Here is a 217-residue protein sequence, read N- to C-terminus: Ufm1-specific protease 1 (217 aa).

Residues Cys53, Asp175, and His177 contribute to the active site.

Belongs to the peptidase C78 family. In terms of tissue distribution, widely expressed. Expressed at higher level in brain, heart, kidney and skeletal muscle.

Its subcellular location is the cytoplasm. The protein localises to the cytosol. Its function is as follows. Thiol-dependent isopeptidase that specifically mediate the processing of UFM1 precursors as well as the deconjugation of UFM1 from target proteins. Mainly responsible for the maturation of the UFM1 precursor, a prerequisite for conjugation reactions. The chain is Ufm1-specific protease 1 from Mus musculus (Mouse).